The sequence spans 74 residues: Translation initiation factor IF-1 (74 aa).

The region spanning 1–72 (MADTEKLKML…TRGRITYRHR (72 aa)) is the S1-like domain.

It belongs to the IF-1 family. In terms of assembly, component of the 30S ribosomal translation pre-initiation complex which assembles on the 30S ribosome in the order IF-2 and IF-3, IF-1 and N-formylmethionyl-tRNA(fMet); mRNA recruitment can occur at any time during PIC assembly.

It localises to the cytoplasm. Functionally, one of the essential components for the initiation of protein synthesis. Stabilizes the binding of IF-2 and IF-3 on the 30S subunit to which N-formylmethionyl-tRNA(fMet) subsequently binds. Helps modulate mRNA selection, yielding the 30S pre-initiation complex (PIC). Upon addition of the 50S ribosomal subunit IF-1, IF-2 and IF-3 are released leaving the mature 70S translation initiation complex. The protein is Translation initiation factor IF-1 of Ureaplasma parvum serovar 3 (strain ATCC 700970).